The following is a 427-amino-acid chain: Tumor necrosis factor receptor superfamily member 16 (427 aa).

The N-terminal stretch at 1–31 (MRRAGAACSAMDRLRLLLLLLLLLGVSFGGA) is a signal peptide. Over 32–254 (KETCSTGMYT…VVTRGTADNL (223 aa)) the chain is Extracellular. 4 TNFR-Cys repeats span residues 34-67 (TCST…QTVC), 69-110 (PCLD…DAVC), 111-149 (RCSY…NTVC), and 151-191 (ECPE…DAEC). Disulfide bonds link C35–C46, C47–C60, C50–C67, C70–C86, C89–C102, C92–C110, C112–C125, C128–C141, C131–C149, C152–C167, C170–C183, and C173–C191. N63 carries an N-linked (GlcNAc...) asparagine glycan. Residues 197–223 (RWITRSTPPEGSDVTTPSTQEPEAPPE) are disordered. Residues 200–217 (TRSTPPEGSDVTTPSTQE) show a composition bias toward polar residues. A helical transmembrane segment spans residues 255–275 (IPVYCSILAAVVVGLVAYIAF). Over 276–427 (KRWNSCKQNK…CSESTATSPV (152 aa)) the chain is Cytoplasmic. 2 stretches are compositionally biased toward polar residues: residues 284-294 (NKQGANSRPVN) and 308-329 (SGIS…TASG). The interval 284–334 (NKQGANSRPVNQTPPPEGEKLHSDSGISVDSQSLHDQQTHTQTASGQALKG) is disordered. S314 is modified (phosphoserine). Residues 329-344 (GQALKGDGNLYSSLPL) are mediates interaction with KIDINS220. A Death domain is found at 356-421 (GDTWRHLAGE…DIVESLCSES (66 aa)).

Homodimer; disulfide-linked. Heterodimer with SORCS2. The extracellular domains of the heterodimer bind NGF. The cytoplasmic region of the heterodimer binds TRIO. NGF binding mediates dissociation of TRIO from the receptor complex. Interacts with TRAF2, TRAF4, TRAF6, PTPN13 and RANBP9. Interacts through TRAF6 with SQSTM1 which bridges NGFR to NTRK1. Interacts with BEX1. Interacts with BEX3. Interacts with KIDINS220 and NTRK1. Can form a ternary complex with NTRK1 and KIDINS220 and this complex is affected by the expression levels of KIDINS220. An increase in KIDINS220 expression leads to a decreased association of NGFR and NTRK1. Interacts (via death domain) with RAB31. Interacts with NTRK2; may regulate the ligand specificity of the NTRK2 receptor. Interacts with LINGO1. Interacts with NRADD. Interacts with MAGED1; the interaction antagonizes the association NGFR:NTRK1. Interacts with RTN4R. Interacts (via death domain) with ARHGDIA and RIPK2. Interacts with BFAR. In terms of assembly, (Microbial infection) Binds to rabies virus glycoprotein Gs. In terms of processing, N-glycosylated. O-glycosylated. Post-translationally, phosphorylated on serine residues. In terms of tissue distribution, detected in Schwann cells. Detected in embryonic brain, in hippocampus neurons (at protein level). Detected in brain and spinal cord.

The protein resides in the cell membrane. Its subcellular location is the cytoplasm. It localises to the perikaryon. The protein localises to the cell projection. It is found in the growth cone. The protein resides in the dendritic spine. Functionally, low affinity neurotrophin receptor which can bind to mature NGF, BDNF, NTF3, and NTF4. Forms a heterodimeric receptor with SORCS2 that binds the precursor forms of NGF (proNGF), BDNF (proBDNF) and NTF3 (proNT3) with high affinity, and has much lower affinity for mature NGF and BDNF. Plays an important role in differentiation and survival of specific neuronal populations during development. Can mediate cell survival as well as cell death of neural cells. The heterodimeric receptor formed with SORCS2 plays a role in proBDNF-dependent synaptic plasticity, in hippocampal long term depression (LTD) and long term potentiation (LTP). Plays a role in the inactivation of RHOA. Plays a role in the regulation of the translocation of GLUT4 to the cell surface in adipocytes and skeletal muscle cells in response to insulin, probably by regulating RAB31 activity, and thereby contributes to the regulation of insulin-dependent glucose uptake. Necessary for the circadian oscillation of the clock genes BMAL1, PER1, PER2 and NR1D1 in the suprachiasmatic nucleus (SCN) of the brain and in liver and of the genes involved in glucose and lipid metabolism in the liver. Its function is as follows. (Microbial infection) Cell surface receptor for rabies virus glycoprotein Gs. In terms of biological role, does not bind NGF, BDNF, NTF3, and NTF4. The protein is Tumor necrosis factor receptor superfamily member 16 (Ngfr) of Mus musculus (Mouse).